The sequence spans 479 residues: Aspartyl/glutamyl-tRNA(Asn/Gln) amidotransferase subunit B (479 aa).

It belongs to the GatB/GatE family. GatB subfamily. In terms of assembly, heterotrimer of A, B and C subunits.

It catalyses the reaction L-glutamyl-tRNA(Gln) + L-glutamine + ATP + H2O = L-glutaminyl-tRNA(Gln) + L-glutamate + ADP + phosphate + H(+). The enzyme catalyses L-aspartyl-tRNA(Asn) + L-glutamine + ATP + H2O = L-asparaginyl-tRNA(Asn) + L-glutamate + ADP + phosphate + 2 H(+). Its function is as follows. Allows the formation of correctly charged Asn-tRNA(Asn) or Gln-tRNA(Gln) through the transamidation of misacylated Asp-tRNA(Asn) or Glu-tRNA(Gln) in organisms which lack either or both of asparaginyl-tRNA or glutaminyl-tRNA synthetases. The reaction takes place in the presence of glutamine and ATP through an activated phospho-Asp-tRNA(Asn) or phospho-Glu-tRNA(Gln). The chain is Aspartyl/glutamyl-tRNA(Asn/Gln) amidotransferase subunit B from Streptococcus pyogenes serotype M49 (strain NZ131).